A 494-amino-acid polypeptide reads, in one-letter code: Aspartyl/glutamyl-tRNA(Asn/Gln) amidotransferase subunit B (494 aa).

It belongs to the GatB/GatE family. GatB subfamily. In terms of assembly, heterotrimer of A, B and C subunits.

It carries out the reaction L-glutamyl-tRNA(Gln) + L-glutamine + ATP + H2O = L-glutaminyl-tRNA(Gln) + L-glutamate + ADP + phosphate + H(+). The catalysed reaction is L-aspartyl-tRNA(Asn) + L-glutamine + ATP + H2O = L-asparaginyl-tRNA(Asn) + L-glutamate + ADP + phosphate + 2 H(+). Functionally, allows the formation of correctly charged Asn-tRNA(Asn) or Gln-tRNA(Gln) through the transamidation of misacylated Asp-tRNA(Asn) or Glu-tRNA(Gln) in organisms which lack either or both of asparaginyl-tRNA or glutaminyl-tRNA synthetases. The reaction takes place in the presence of glutamine and ATP through an activated phospho-Asp-tRNA(Asn) or phospho-Glu-tRNA(Gln). This chain is Aspartyl/glutamyl-tRNA(Asn/Gln) amidotransferase subunit B, found in Synechococcus sp. (strain WH7803).